We begin with the raw amino-acid sequence, 494 residues long: Glutamate--tRNA ligase (494 aa).

Positions 10–20 (PSPTGDPHVGT) match the 'HIGH' region motif. Zn(2+)-binding residues include C107, C109, C134, and H136. The 'KMSKS' region signature appears at 251 to 255 (KLSKR). K254 is a binding site for ATP.

This sequence belongs to the class-I aminoacyl-tRNA synthetase family. Glutamate--tRNA ligase type 1 subfamily. Monomer. It depends on Zn(2+) as a cofactor.

It localises to the cytoplasm. It catalyses the reaction tRNA(Glu) + L-glutamate + ATP = L-glutamyl-tRNA(Glu) + AMP + diphosphate. Its function is as follows. Catalyzes the attachment of glutamate to tRNA(Glu) in a two-step reaction: glutamate is first activated by ATP to form Glu-AMP and then transferred to the acceptor end of tRNA(Glu). The protein is Glutamate--tRNA ligase of Pseudomonas aeruginosa (strain ATCC 15692 / DSM 22644 / CIP 104116 / JCM 14847 / LMG 12228 / 1C / PRS 101 / PAO1).